The primary structure comprises 450 residues: C4-dicarboxylate transport protein (450 aa).

9 helical membrane-spanning segments follow: residues 10–30 (SLYFQVIVAIVIGILIGHFYP), 46–66 (LIKMVIAPIIFCTVVSGIAGM), 78–98 (YALLYFEIVSTIALLIGLIVV), 143–163 (IVGAFANGDILQVLMFSVIFG), 190–210 (IINMIMKLAPLGAFGAMAFTI), 224–244 (LMICFYITCALFVVFVLGAIA), 291–311 (VVGLVIPTGYSFNLDGTSIYL), 332–352 (ITLLLVLLLSSKGAAGVTGSG), and 354–374 (IVLAATLSAVGHLPVAGLALI). Residues 428–450 (PEDDLGVAEGPTPGAAVNTTKTV) are disordered.

This sequence belongs to the dicarboxylate/amino acid:cation symporter (DAACS) (TC 2.A.23) family.

Its subcellular location is the cell inner membrane. Its function is as follows. Responsible for the transport of dicarboxylates such as succinate, fumarate, and malate from the periplasm across the membrane. The polypeptide is C4-dicarboxylate transport protein (Pseudomonas syringae pv. syringae (strain B728a)).